Reading from the N-terminus, the 76-residue chain is Putative snRNP Sm-like protein (76 aa).

One can recognise a Sm domain in the interval 4-76; sequence RPLDVIHKSL…VLALSPVELE (73 aa).

It belongs to the snRNP Sm proteins family.

This is Putative snRNP Sm-like protein from Thermococcus kodakarensis (strain ATCC BAA-918 / JCM 12380 / KOD1) (Pyrococcus kodakaraensis (strain KOD1)).